Reading from the N-terminus, the 385-residue chain is ATP phosphoribosyltransferase regulatory subunit (385 aa).

This sequence belongs to the class-II aminoacyl-tRNA synthetase family. HisZ subfamily. As to quaternary structure, heteromultimer composed of HisG and HisZ subunits.

The protein resides in the cytoplasm. The protein operates within amino-acid biosynthesis; L-histidine biosynthesis; L-histidine from 5-phospho-alpha-D-ribose 1-diphosphate: step 1/9. In terms of biological role, required for the first step of histidine biosynthesis. May allow the feedback regulation of ATP phosphoribosyltransferase activity by histidine. The sequence is that of ATP phosphoribosyltransferase regulatory subunit from Bordetella parapertussis (strain 12822 / ATCC BAA-587 / NCTC 13253).